Reading from the N-terminus, the 477-residue chain is uncharacterized protein (477 aa).

12 consecutive transmembrane segments (helical) span residues 31-51, 60-80, 103-123, 130-150, 177-197, 205-225, 248-268, 291-311, 334-354, 359-379, 384-404, and 433-453; these read LLRL…LLGT, LGVP…VAPF, LWFG…SLIL, MGPA…AGVG, LLYV…GWLL, LIRV…IALW, AWGL…VMVG, VGQT…GFIW, IVAF…LFFA, IGLG…MVVV, GIAL…AVFI, and VVYV…GPLV.

Belongs to the PucC family.

The protein resides in the cell membrane. This is an uncharacterized protein from Rhodobacter capsulatus (Rhodopseudomonas capsulata).